We begin with the raw amino-acid sequence, 1216 residues long: Protein WWC3 (1216 aa).

Positions Met1 to Ala63 are disordered. Pro residues predominate over residues Glu21–Pro51. 2 consecutive WW domains span residues Leu59–Asp92 and Asp106–Glu139. Coiled-coil stretches lie at residues Lys164–Glu250 and Asp354–Arg468. 3 disordered regions span residues Val487 to Gly508, Gly546 to Cys612, and Asp634 to Thr668. The span at Pro570–Pro598 shows a compositional bias: low complexity. The C2 domain maps to Ser722–His847. Residues Asp885–Ser936 adopt a coiled-coil conformation. The interval Ser1060 to Arg1079 is interaction with PRKCZ. Positions Leu1091–Tyr1160 form a coiled coil.

This sequence belongs to the WWC family. Forms homodimers and heterodimers with WWC1 and WWC2. Interacts with DLC1 and PRKCZ. Interacts (via WW domains) with LATS1 and LATS2.

The protein resides in the cytoplasm. The protein localises to the cytosol. In terms of biological role, regulator of the Hippo signaling pathway, also known as the Salvador-Warts-Hippo (SWH) pathway. Enhances phosphorylation of LATS1 and YAP1 and negatively regulates cell proliferation and organ growth due to a suppression of the transcriptional activity of YAP1, the major effector of the Hippo pathway. The protein is Protein WWC3 of Homo sapiens (Human).